Consider the following 317-residue polypeptide: Phospho-N-acetylmuramoyl-pentapeptide-transferase (317 aa).

Helical transmembrane passes span 4-24, 49-69, 76-96, 112-132, 147-167, 186-206, 223-243, 246-266, and 297-317; these read LIYS…ILIP, TPTM…AVIV, AMIA…DDTL, MILL…NPYI, LGVF…NAVN, FLAL…CAIL, IFMG…VAMI, LPLL…SVIF, and RVVS…FLSL.

This sequence belongs to the glycosyltransferase 4 family. MraY subfamily. It depends on Mg(2+) as a cofactor.

The protein localises to the cell membrane. The catalysed reaction is UDP-N-acetyl-alpha-D-muramoyl-L-alanyl-gamma-D-glutamyl-meso-2,6-diaminopimeloyl-D-alanyl-D-alanine + di-trans,octa-cis-undecaprenyl phosphate = di-trans,octa-cis-undecaprenyl diphospho-N-acetyl-alpha-D-muramoyl-L-alanyl-D-glutamyl-meso-2,6-diaminopimeloyl-D-alanyl-D-alanine + UMP. Its pathway is cell wall biogenesis; peptidoglycan biosynthesis. In terms of biological role, catalyzes the initial step of the lipid cycle reactions in the biosynthesis of the cell wall peptidoglycan: transfers peptidoglycan precursor phospho-MurNAc-pentapeptide from UDP-MurNAc-pentapeptide onto the lipid carrier undecaprenyl phosphate, yielding undecaprenyl-pyrophosphoryl-MurNAc-pentapeptide, known as lipid I. This is Phospho-N-acetylmuramoyl-pentapeptide-transferase from Clostridium kluyveri (strain NBRC 12016).